We begin with the raw amino-acid sequence, 27 residues long: Paragonial peptide PS-1 (27 aa).

Positions 1-17 (DVPSANANANNQRTAAA) are enriched in low complexity. The disordered stretch occupies residues 1 to 27 (DVPSANANANNQRTAAAKPQANAEASS).

In terms of tissue distribution, main cells of the accessory glands of males (paragonial gland).

It is found in the secreted. In terms of biological role, represses female sexual receptivity and stimulates oviposition. This peptide has a low activity. The polypeptide is Paragonial peptide PS-1 (PapC) (Drosophila funebris (Fruit fly)).